A 273-amino-acid chain; its full sequence is Large ribosomal subunit protein uL2 (273 aa).

The interval 228-273 is disordered; the sequence is VDHPHGGGEGKTSGGRHPVTPWGFPTKGKKTRKNKRTSKFIVKKRK. Basic residues predominate over residues 254–273; it reads KGKKTRKNKRTSKFIVKKRK.

It belongs to the universal ribosomal protein uL2 family. As to quaternary structure, part of the 50S ribosomal subunit. Forms a bridge to the 30S subunit in the 70S ribosome.

Its function is as follows. One of the primary rRNA binding proteins. Required for association of the 30S and 50S subunits to form the 70S ribosome, for tRNA binding and peptide bond formation. It has been suggested to have peptidyltransferase activity; this is somewhat controversial. Makes several contacts with the 16S rRNA in the 70S ribosome. The polypeptide is Large ribosomal subunit protein uL2 (Rickettsia canadensis (strain McKiel)).